We begin with the raw amino-acid sequence, 883 residues long: Lethal(3)malignant brain tumor-like protein 3 (883 aa).

Residues 1–64 are interaction with RBPJ. Required for transcription repressor activity on Notch target genes; sequence MTESASSTSG…VKKATATTTW (64 aa). Residues 146 to 156 show a composition bias toward basic and acidic residues; sequence HAKDKDQKDER. The interval 146–223 is disordered; sequence HAKDKDQKDE…RGDSAVLKQG (78 aa). Acidic residues-rich tracts occupy residues 157–166 and 185–194; these read DGGEDNDEED and DDGEERDDEM. MBT repeat units follow at residues 232 to 332, 340 to 439, and 448 to 543; these read WCWA…LRPP, FNWQ…LITP, and FSWD…LQAP. The CCHHC-type; degenerate zinc-finger motif lies at 549–593; the sequence is LMEPSETGGCPTLGCRGVGHFKKSRYLGTQSGANCPYSEINLSKE. Residues 595-768 form a disordered region; it reads IFPDRLSGDT…TQQQAQTQQQ (174 aa). Over residues 616–662 the composition is skewed to basic and acidic residues; sequence KRMDTRESSSSPETREKHANNFKEDSEKKKENEVKTSAEAKVVREEP. A Glycyl lysine isopeptide (Lys-Gly) (interchain with G-Cter in SUMO2) cross-link involves residue Lys-638. Composition is skewed to low complexity over residues 663–742 and 749–768; these read TPSV…QQPQ and QPQQVQQAQPTQQQAQTQQQ. The region spanning 811 to 875 is the SAM domain; it reads WSTDEVSEFI…FNSILMFKAA (65 aa).

As to quaternary structure, interacts with RNF2. Interacts (via SAM domain) with SAMD1 (via SAM domain); the interaction mediates L3MBTL3 binding to chromatin. Interacts with RBPJ; the interaction is required for L3MBTL3 localization to chromatin and is impaired the Notch-derived peptides containing the intracellular domain (NICD). Interacts (via SAM domain) with KDM1A. Interacts with DCAF5. Interacts with DNMT1. Interacts with E2F1. Interacts with SOX2. Interacts with SFMBT1. Detected in hematopoietic progenitor cells in fetal liver. Detected in adult bone marrow, heart, brain, spleen, lung, liver, kidney and testis.

Its subcellular location is the nucleus. Its function is as follows. Is a negative regulator of Notch target genes expression, required for RBPJ-mediated transcriptional repression. It recruits KDM1A to Notch-responsive elements and promotes KDM1A-mediated H3K4me demethylation. Involved in the regulation of ubiquitin-dependent degradation of a set of methylated non-histone proteins, including SOX2. It acts as an adapter recruiting the CRL4-DCAF5 E3 ubiquitin ligase complex to methylated target proteins. Also involved in the regulation of ubiquitin-dependent degradation of methylated DNMT1 and E2F1. Required for normal maturation of myeloid progenitor cells. This chain is Lethal(3)malignant brain tumor-like protein 3, found in Mus musculus (Mouse).